We begin with the raw amino-acid sequence, 99 residues long: Putative membrane protein insertion efficiency factor (99 aa).

The protein belongs to the UPF0161 family.

It is found in the cell membrane. Functionally, could be involved in insertion of integral membrane proteins into the membrane. The chain is Putative membrane protein insertion efficiency factor from Corynebacterium glutamicum (strain ATCC 13032 / DSM 20300 / JCM 1318 / BCRC 11384 / CCUG 27702 / LMG 3730 / NBRC 12168 / NCIMB 10025 / NRRL B-2784 / 534).